The sequence spans 105 residues: Secreted RxLR effector protein 158 (105 aa).

An N-terminal signal peptide occupies residues Met-1–Gly-22. The RxLR-dEER signature appears at Arg-50–Arg-71.

The protein belongs to the RxLR effector family.

Its subcellular location is the secreted. It localises to the host nucleus. The protein localises to the host cytoplasm. Its function is as follows. Secreted effector that partially suppresses the host cell death induced by cell death-inducing proteins. This is Secreted RxLR effector protein 158 from Plasmopara viticola (Downy mildew of grapevine).